The primary structure comprises 194 residues: Holliday junction branch migration complex subunit RuvA (194 aa).

The domain I stretch occupies residues 1–64 (MISRLTGKLV…EDAHLLFGFA (64 aa)). Residues 65 to 143 (TAEERKTFRQ…AHTVTDGLFA (79 aa)) are domain II. A flexible linker region spans residues 144 to 147 (ASPA). Positions 147–194 (AADETEDIVSTLLALGYNEREAKAAVKGVPKGTDVGEGVRLALKNLLK) are domain III.

This sequence belongs to the RuvA family. In terms of assembly, homotetramer. Forms an RuvA(8)-RuvB(12)-Holliday junction (HJ) complex. HJ DNA is sandwiched between 2 RuvA tetramers; dsDNA enters through RuvA and exits via RuvB. An RuvB hexamer assembles on each DNA strand where it exits the tetramer. Each RuvB hexamer is contacted by two RuvA subunits (via domain III) on 2 adjacent RuvB subunits; this complex drives branch migration. In the full resolvosome a probable DNA-RuvA(4)-RuvB(12)-RuvC(2) complex forms which resolves the HJ.

Its subcellular location is the cytoplasm. Functionally, the RuvA-RuvB-RuvC complex processes Holliday junction (HJ) DNA during genetic recombination and DNA repair, while the RuvA-RuvB complex plays an important role in the rescue of blocked DNA replication forks via replication fork reversal (RFR). RuvA specifically binds to HJ cruciform DNA, conferring on it an open structure. The RuvB hexamer acts as an ATP-dependent pump, pulling dsDNA into and through the RuvAB complex. HJ branch migration allows RuvC to scan DNA until it finds its consensus sequence, where it cleaves and resolves the cruciform DNA. The sequence is that of Holliday junction branch migration complex subunit RuvA from Neisseria gonorrhoeae (strain ATCC 700825 / FA 1090).